The chain runs to 378 residues: Ribosomal RNA large subunit methyltransferase G (378 aa).

Belongs to the methyltransferase superfamily. RlmG family.

The protein localises to the cytoplasm. It carries out the reaction guanosine(1835) in 23S rRNA + S-adenosyl-L-methionine = N(2)-methylguanosine(1835) in 23S rRNA + S-adenosyl-L-homocysteine + H(+). Its function is as follows. Specifically methylates the guanine in position 1835 (m2G1835) of 23S rRNA. The sequence is that of Ribosomal RNA large subunit methyltransferase G from Escherichia coli O1:K1 / APEC.